The primary structure comprises 249 residues: MWIGVISLFPDMFRAITDFGVTGRAVKRGLLDINYWNPRDFAHDKHRTVDDRPYGGGPGMLMMVQPLRDAIQAAKQAAGDDVKVIYLSPQGKKLTQSGVTELARCKKLILVAGRYEGIDERIIQSDIDEEWSVGDYVLSGGELPAMTLVDAVSRLVPGVLGDMASAEQDSFTDGLLDCPHYTRPESLDGVVVPDVLLSGNHEYIRRWRLKQSLGRTWQRRPELLDNLALTDEQAKLLAQYVQELNAEQQ.

S-adenosyl-L-methionine is bound by residues G113 and 133 to 138 (VGDYVL).

The protein belongs to the RNA methyltransferase TrmD family. In terms of assembly, homodimer.

The protein localises to the cytoplasm. It catalyses the reaction guanosine(37) in tRNA + S-adenosyl-L-methionine = N(1)-methylguanosine(37) in tRNA + S-adenosyl-L-homocysteine + H(+). In terms of biological role, specifically methylates guanosine-37 in various tRNAs. This is tRNA (guanine-N(1)-)-methyltransferase from Tolumonas auensis (strain DSM 9187 / NBRC 110442 / TA 4).